Here is a 414-residue protein sequence, read N- to C-terminus: MVLGKVKSLTISFDCLNDSNVPVYSSGDTVSGRVNLEVTGEIRVKSLKIHARGHAKVRWTESRNAGSNTAYTQNYTEEVEYFNHKDILIGHERDDDNSEEGFHTIHSGRHEYAFSFELPQTPLATSFEGRHGSVRYWVKAELHRPWLLPVKLKKEFTVFEHIDINTPSLLSPQAGTKEKTLCCWFCTSGPISLSAKIERKGYTPGESIQIFAEIENCSSRMVVPKAAIYQTQAFYAKGKMKEVKQLVANLRGESLSSGKTETWNGKLLKIPPVSPSILDCSIIRVEYSLMVYVDIPGAMDLLLSLPLVIGTIPLHPFGSRTSSVSSQCSMSMNWLALALPERPEAPPSYAEVVTEEQRRNNLAPVGACDDFERALQGPLFAYIQEFRFLPPPLYSEIDPNPDQSSEDRPSCPSR.

2 short sequence motifs (PPxY motif) span residues 346-349 (PPSY) and 391-394 (PPLY). Positions 393–414 (LYSEIDPNPDQSSEDRPSCPSR) are disordered. Over residues 405-414 (SEDRPSCPSR) the composition is skewed to basic and acidic residues.

Belongs to the arrestin family. In terms of assembly, interacts (via PPxY motifs) with NEDD4 (via WW domains). Interacts with ADRB2. Interacts with ADRB3. Interacts with HGS (via PPxY motifs). Does not bind TXN (thioredoxin). Interacts with ITCH. In terms of tissue distribution, detected in visceral fat, subcutaneous fat, brown fat and skeletal muscle, and at lower levels in kidney.

It localises to the cytoplasm. It is found in the cell membrane. The protein resides in the lysosome. Its subcellular location is the endosome. The protein localises to the early endosome. Its function is as follows. Adapter protein that plays a role in regulating cell-surface expression of adrenergic receptors and probably also other G protein-coupled receptors. Plays a role in NEDD4-mediated ubiquitination and endocytosis af activated ADRB2 and subsequent ADRB2 degradation. May recruit NEDD4 to ADRB2. Alternatively, may function as adapter protein that does not play a major role in recruiting NEDD4 to ADRB2, but rather plays a role in a targeting ADRB2 to endosomes. The chain is Arrestin domain-containing protein 3 (Arrdc3) from Mus musculus (Mouse).